The primary structure comprises 196 residues: Holliday junction branch migration complex subunit RuvA (196 aa).

The segment at 1 to 63 (MIASVRGEVL…EDSMTLYGFP (63 aa)) is domain I. The tract at residues 64 to 138 (DGETRDLFLT…DKVGVAATGG (75 aa)) is domain II. Residues 138-142 (GALST) are flexible linker. The segment at 143-196 (NGHAVRSPVVEALVGLGFAAKQAEEATDTVLAANHDATTSSALRSALSLLGKAR) is domain III.

It belongs to the RuvA family. Homotetramer. Forms an RuvA(8)-RuvB(12)-Holliday junction (HJ) complex. HJ DNA is sandwiched between 2 RuvA tetramers; dsDNA enters through RuvA and exits via RuvB. An RuvB hexamer assembles on each DNA strand where it exits the tetramer. Each RuvB hexamer is contacted by two RuvA subunits (via domain III) on 2 adjacent RuvB subunits; this complex drives branch migration. In the full resolvosome a probable DNA-RuvA(4)-RuvB(12)-RuvC(2) complex forms which resolves the HJ.

Its subcellular location is the cytoplasm. Its function is as follows. The RuvA-RuvB-RuvC complex processes Holliday junction (HJ) DNA during genetic recombination and DNA repair, while the RuvA-RuvB complex plays an important role in the rescue of blocked DNA replication forks via replication fork reversal (RFR). RuvA specifically binds to HJ cruciform DNA, conferring on it an open structure. The RuvB hexamer acts as an ATP-dependent pump, pulling dsDNA into and through the RuvAB complex. HJ branch migration allows RuvC to scan DNA until it finds its consensus sequence, where it cleaves and resolves the cruciform DNA. The protein is Holliday junction branch migration complex subunit RuvA of Mycobacterium bovis (strain ATCC BAA-935 / AF2122/97).